Here is a 454-residue protein sequence, read N- to C-terminus: MLSRSRCVSRAFSRSLSAFQKGNCPLGRRSLPGVSLCRGPGYPDNRKMVINSGSVFRVRFFQTTAVCKNDVITVQTPAFAESVTEGDVRWEKAVGDAVAEDEVVCEIETDKTSVQVPSPANGIIEALLVPDGGKVEGGTPLFTLRKTGAAPAKAKPAETPAPAHKAEPAAPAAPPPPAAPVLTQMPPVPSPSQPPSSKPVSAIKPTAAPPLAEAGAAKGLRSEHREKMNRMRQRIAQRLKEAQNTCAMLTTFNEVDMSNIQEMRARHKDAFLKKHNLKLGFMSAFVKASAFALQEQPVVNAVIDDATKEVVYRDYIDISVAVATPRGLVVPVIRNVETMNYADIERTINELGEKARKNELAIEDMDGGTFTISNGGVFGSLFGTPIINPPQSAILGMHAIFDRPVAVGGKVEVRPMMYVALTYDHRLIDGREAVTFLRKIKAAVEDPRVLLLDL.

A mitochondrion-targeting transit peptide spans 1–68 (MLSRSRCVSR…RFFQTTAVCK (68 aa)). The Lipoyl-binding domain maps to 71–145 (VITVQTPAFA…EGGTPLFTLR (75 aa)). S82 bears the Phosphoserine mark. K111 bears the N6-lipoyllysine mark. The disordered stretch occupies residues 147–227 (TGAAPAKAKP…KGLRSEHREK (81 aa)). A compositionally biased stretch (low complexity) spans 149–163 (AAPAKAKPAETPAPA). K155 carries the N6-acetyllysine modification. Positions 186–197 (PPVPSPSQPPSS) are enriched in pro residues. Residues 198–217 (KPVSAIKPTAAPPLAEAGAA) are compositionally biased toward low complexity. An N6-acetyllysine mark is found at K268, K273, K274, K278, and K308. Catalysis depends on residues H425 and D429.

Belongs to the 2-oxoacid dehydrogenase family. In terms of assembly, the 2-oxoglutarate dehydrogenase complex is composed of OGDH (2-oxoglutarate dehydrogenase; E1), DLST (dihydrolipoamide succinyltransferase; E2), DLD (dihydrolipoamide dehydrogenase; E3) and the assembly factor KGD4. It contains multiple copies of the three enzymatic components (E1, E2 and E3). In the nucleus, the 2-oxoglutarate dehydrogenase complex associates with KAT2A. Interacts with ABHD11; this interaction maintains the functional lipoylation of the 2-oxoglutarate dehydrogenase complex. (R)-lipoate is required as a cofactor.

It is found in the mitochondrion matrix. The protein localises to the nucleus. It catalyses the reaction N(6)-[(R)-dihydrolipoyl]-L-lysyl-[protein] + succinyl-CoA = N(6)-[(R)-S(8)-succinyldihydrolipoyl]-L-lysyl-[protein] + CoA. It participates in amino-acid degradation; L-lysine degradation via saccharopine pathway; glutaryl-CoA from L-lysine: step 6/6. It functions in the pathway carbohydrate metabolism; tricarboxylic acid cycle. Its function is as follows. Dihydrolipoamide succinyltransferase (E2) component of the 2-oxoglutarate dehydrogenase complex. The 2-oxoglutarate dehydrogenase complex catalyzes the overall conversion of 2-oxoglutarate to succinyl-CoA and CO(2). The 2-oxoglutarate dehydrogenase complex is mainly active in the mitochondrion. A fraction of the 2-oxoglutarate dehydrogenase complex also localizes in the nucleus and is required for lysine succinylation of histones: associates with KAT2A on chromatin and provides succinyl-CoA to histone succinyltransferase KAT2A. The chain is Dihydrolipoyllysine-residue succinyltransferase component of 2-oxoglutarate dehydrogenase complex, mitochondrial from Mus musculus (Mouse).